A 227-amino-acid chain; its full sequence is Phosphoribosylformylglycinamidine synthase subunit PurQ (227 aa).

Positions 3–225 (FAVIVFPGSN…LKQWRETYVV (223 aa)) constitute a Glutamine amidotransferase type-1 domain. Cys86 (nucleophile) is an active-site residue. Residues His194 and Glu196 contribute to the active site.

As to quaternary structure, part of the FGAM synthase complex composed of 1 PurL, 1 PurQ and 2 PurS subunits.

It is found in the cytoplasm. The catalysed reaction is N(2)-formyl-N(1)-(5-phospho-beta-D-ribosyl)glycinamide + L-glutamine + ATP + H2O = 2-formamido-N(1)-(5-O-phospho-beta-D-ribosyl)acetamidine + L-glutamate + ADP + phosphate + H(+). It catalyses the reaction L-glutamine + H2O = L-glutamate + NH4(+). The protein operates within purine metabolism; IMP biosynthesis via de novo pathway; 5-amino-1-(5-phospho-D-ribosyl)imidazole from N(2)-formyl-N(1)-(5-phospho-D-ribosyl)glycinamide: step 1/2. In terms of biological role, part of the phosphoribosylformylglycinamidine synthase complex involved in the purines biosynthetic pathway. Catalyzes the ATP-dependent conversion of formylglycinamide ribonucleotide (FGAR) and glutamine to yield formylglycinamidine ribonucleotide (FGAM) and glutamate. The FGAM synthase complex is composed of three subunits. PurQ produces an ammonia molecule by converting glutamine to glutamate. PurL transfers the ammonia molecule to FGAR to form FGAM in an ATP-dependent manner. PurS interacts with PurQ and PurL and is thought to assist in the transfer of the ammonia molecule from PurQ to PurL. The protein is Phosphoribosylformylglycinamidine synthase subunit PurQ of Bacillus cereus (strain Q1).